A 309-amino-acid polypeptide reads, in one-letter code: Histidine protein methyltransferase 1 homolog (309 aa).

Disordered stretches follow at residues 1-37 (MSFK…FDSS) and 79-111 (KPFK…NNKD). Residues 25-37 (EESKLDISEFDSS) are compositionally biased toward basic and acidic residues. Residues 84–109 (NQDNNNDNNVNSNDKNDNNNNNNNNN) show a composition bias toward low complexity. Residues 132–136 (LWECS), Gly159, 179–181 (QDY), 209–211 (GDW), and Ser229 contribute to the S-adenosyl-L-methionine site.

Belongs to the methyltransferase superfamily. METTL18 family.

It is found in the cytoplasm. Its subcellular location is the cytosol. The protein resides in the nucleus. It localises to the nucleolus. The catalysed reaction is L-histidyl-[protein] + S-adenosyl-L-methionine = N(tele)-methyl-L-histidyl-[protein] + S-adenosyl-L-homocysteine + H(+). Functionally, protein-L-histidine N-tele-methyltransferase that probably monomethylates RPL3. Through the methylation of RPL3 may regulate the dynamics of pre-rRNA processing, ribosome biogenesis, and translation. This chain is Histidine protein methyltransferase 1 homolog, found in Dictyostelium discoideum (Social amoeba).